Reading from the N-terminus, the 97-residue chain is RxLR effector protein CRE10 (97 aa).

Positions 1 to 21 (MRLSYILVVVIAVTLQACVCA) are cleaved as a signal peptide. The RxLR-dEER motif lies at 48–66 (RLLRGVKKRTAEREVQEER).

It belongs to the RxLR effector family.

The protein localises to the secreted. It is found in the host cell. Its function is as follows. Effector that is involved in host plant infection. Contributes to virulence during the early infection stage, by inhibiting plant defense responses induced by both PAMP-triggered immunity (PTI) and effector-triggered immunity (ETI). This Phytophthora infestans (strain T30-4) (Potato late blight agent) protein is RxLR effector protein CRE10.